The following is a 216-amino-acid chain: Uracil phosphoribosyltransferase (216 aa).

5-phospho-alpha-D-ribose 1-diphosphate is bound by residues Arg85, Arg110, and 135–143 (DPMVATGYS). Uracil-binding positions include Ile200 and 205-207 (GDA). Asp206 contributes to the 5-phospho-alpha-D-ribose 1-diphosphate binding site.

The protein belongs to the UPRTase family. It depends on Mg(2+) as a cofactor.

The catalysed reaction is UMP + diphosphate = 5-phospho-alpha-D-ribose 1-diphosphate + uracil. Its pathway is pyrimidine metabolism; UMP biosynthesis via salvage pathway; UMP from uracil: step 1/1. With respect to regulation, allosterically activated by GTP. Its function is as follows. Catalyzes the conversion of uracil and 5-phospho-alpha-D-ribose 1-diphosphate (PRPP) to UMP and diphosphate. This Burkholderia ambifaria (strain ATCC BAA-244 / DSM 16087 / CCUG 44356 / LMG 19182 / AMMD) (Burkholderia cepacia (strain AMMD)) protein is Uracil phosphoribosyltransferase.